Here is a 187-residue protein sequence, read N- to C-terminus: Elongation factor P (187 aa).

This sequence belongs to the elongation factor P family.

It localises to the cytoplasm. It participates in protein biosynthesis; polypeptide chain elongation. Functionally, involved in peptide bond synthesis. Stimulates efficient translation and peptide-bond synthesis on native or reconstituted 70S ribosomes in vitro. Probably functions indirectly by altering the affinity of the ribosome for aminoacyl-tRNA, thus increasing their reactivity as acceptors for peptidyl transferase. The chain is Elongation factor P from Chelativorans sp. (strain BNC1).